Here is a 505-residue protein sequence, read N- to C-terminus: Glycerol kinase (505 aa).

Residue Thr15 coordinates ADP. Positions 15, 16, and 17 each coordinate ATP. Thr15 serves as a coordination point for sn-glycerol 3-phosphate. ADP is bound at residue Arg19. Residues Arg85, Glu86, Tyr136, and Asp249 each coordinate sn-glycerol 3-phosphate. Residues Arg85, Glu86, Tyr136, Asp249, and Gln250 each coordinate glycerol. Positions 271 and 314 each coordinate ADP. ATP is bound by residues Thr271, Gly314, Gln318, and Gly415. Residues Gly415 and Asn419 each coordinate ADP.

Belongs to the FGGY kinase family.

The catalysed reaction is glycerol + ATP = sn-glycerol 3-phosphate + ADP + H(+). Its pathway is polyol metabolism; glycerol degradation via glycerol kinase pathway; sn-glycerol 3-phosphate from glycerol: step 1/1. Inhibited by fructose 1,6-bisphosphate (FBP). Key enzyme in the regulation of glycerol uptake and metabolism. Catalyzes the phosphorylation of glycerol to yield sn-glycerol 3-phosphate. In Mycoplasma mycoides subsp. mycoides SC (strain CCUG 32753 / NCTC 10114 / PG1), this protein is Glycerol kinase.